The primary structure comprises 869 residues: Synaptonemal complex protein ZEP1 (869 aa).

Coiled coils occupy residues 64–298 (TDLE…SGFT), 330–614 (HEEK…SERY), and 641–713 (RAYH…WKVM). The segment at 841–869 (GSHPHPANIGELFSEGSLNPYAEDPYAFG) is disordered.

Interacts with CRC1. As to expression, highly expressed in panicles.

The protein localises to the nucleus. It is found in the chromosome. Its function is as follows. Required for chromosome synapsis and regulates crossover frequency during meiosis. Acts as a transverse filament protein and constitutes the central element of the synaptonemal complex. The sequence is that of Synaptonemal complex protein ZEP1 (ZEP1) from Oryza sativa subsp. japonica (Rice).